Reading from the N-terminus, the 327-residue chain is tRNA uridine(34) hydroxylase (327 aa).

One can recognise a Rhodanese domain in the interval 142–240 (DDPDTLVIDT…YLEQVPEAES (99 aa)). Cys200 acts as the Cysteine persulfide intermediate in catalysis.

Belongs to the TrhO family.

It catalyses the reaction uridine(34) in tRNA + AH2 + O2 = 5-hydroxyuridine(34) in tRNA + A + H2O. In terms of biological role, catalyzes oxygen-dependent 5-hydroxyuridine (ho5U) modification at position 34 in tRNAs. This Synechococcus sp. (strain CC9605) protein is tRNA uridine(34) hydroxylase.